Reading from the N-terminus, the 528-residue chain is Nucleobase-ascorbate transporter 5 (528 aa).

The segment at 1–20 (MSAPKSGGDPLPHPPKEQLP) is disordered. A run of 12 helical transmembrane segments spans residues 35-55 (AVLL…LIPS), 71-91 (LIQT…VFGT), 93-113 (LPAV…IMLS), 133-153 (TQGA…SGLW), 159-179 (FLSP…LYEL), 181-201 (FPGV…LILI), 219-239 (FAVI…TLGG), 285-305 (FAMM…FIAV), 367-387 (AGFM…ASIP), 390-410 (IIAA…LSLL), 418-438 (FRTL…PQYF), and 460-479 (MVNV…AYLL).

This sequence belongs to the nucleobase:cation symporter-2 (NCS2) (TC 2.A.40) family. In terms of tissue distribution, weakly expressed in the vasculature of developing leaves.

It localises to the membrane. The protein is Nucleobase-ascorbate transporter 5 (NAT5) of Arabidopsis thaliana (Mouse-ear cress).